The primary structure comprises 150 residues: Transcriptional regulator MraZ (150 aa).

SpoVT-AbrB domains are found at residues 8-55 (FINN…GISH) and 84-127 (AVQL…QPQN).

Belongs to the MraZ family. In terms of assembly, forms oligomers.

It is found in the cytoplasm. The protein localises to the nucleoid. The protein is Transcriptional regulator MraZ of Rickettsia bellii (strain OSU 85-389).